Reading from the N-terminus, the 555-residue chain is Phosphomethylpyrimidine synthase (555 aa).

Substrate-binding positions include asparagine 191, methionine 220, tyrosine 249, histidine 285, 305 to 307 (SRG), 346 to 349 (DGLR), and glutamate 385. Position 389 (histidine 389) interacts with Zn(2+). Tyrosine 412 is a substrate binding site. Histidine 453 provides a ligand contact to Zn(2+). The [4Fe-4S] cluster site is built by cysteine 533, cysteine 536, and cysteine 541.

The protein belongs to the ThiC family. In terms of assembly, homodimer. Requires [4Fe-4S] cluster as cofactor.

The catalysed reaction is 5-amino-1-(5-phospho-beta-D-ribosyl)imidazole + S-adenosyl-L-methionine = 4-amino-2-methyl-5-(phosphooxymethyl)pyrimidine + CO + 5'-deoxyadenosine + formate + L-methionine + 3 H(+). The protein operates within cofactor biosynthesis; thiamine diphosphate biosynthesis. Catalyzes the synthesis of the hydroxymethylpyrimidine phosphate (HMP-P) moiety of thiamine from aminoimidazole ribotide (AIR) in a radical S-adenosyl-L-methionine (SAM)-dependent reaction. This Ehrlichia ruminantium (strain Gardel) protein is Phosphomethylpyrimidine synthase.